A 4015-amino-acid polypeptide reads, in one-letter code: Hybrid PKS-NRPS synthetase iccA (4015 aa).

Residues 1–12 are compositionally biased toward polar residues; that stretch reads MAANDSNNQTKP. A disordered region spans residues 1–20; that stretch reads MAANDSNNQTKPQLPEEPVA. In terms of domain architecture, Ketosynthase family 3 (KS3) spans 16–445; that stretch reads EEPVAIVGSS…GTNAHVIIES (430 aa). Active-site for beta-ketoacyl synthase activity residues include Cys-190, His-327, and His-365. The interval 560 to 885 is malonyl-CoA:ACP transacylase (MAT) domain; sequence VFTGQGAQWP…LKRGASDVEA (326 aa). Positions 954–1091 are N-terminal hotdog fold; the sequence is HELLGRRTPD…GRLSVHLGEA (138 aa). Residues 954-1260 form a dehydratase (DH) domain region; that stretch reads HELLGRRTPD…TTKMVGEQDA (307 aa). A PKS/mFAS DH domain is found at 954–1261; the sequence is HELLGRRTPD…TKMVGEQDAS (308 aa). Catalysis depends on His-986, which acts as the Proton acceptor; for dehydratase activity. The tract at residues 1106-1261 is C-terminal hotdog fold; the sequence is LVNINTDRAY…TKMVGEQDAS (156 aa). Asp-1165 (proton donor; for dehydratase activity) is an active-site residue. A methyltransferase (MT) domain region spans residues 1400–1598; that stretch reads KDDMLNRFYM…YSGADMVVHD (199 aa). A ketoreductase (KR) domain region spans residues 2120–2261; it reads KTYLMVGAAG…STATTIGNIG (142 aa). Residues 2379–2405 form a disordered region; that stretch reads STLQNDSSQTGGTGNGSSVRRQVEEAQ. The 80-residue stretch at 2409 to 2488 folds into the Carrier 1 domain; sequence EAVDAVLDGF…QICTTAAKKV (80 aa). The residue at position 2448 (Ser-2448) is an O-(pantetheine 4'-phosphoryl)serine. Over residues 2498–2515 the composition is skewed to basic and acidic residues; sequence EDAVAEEGGREAASKKEP. Disordered regions lie at residues 2498–2529 and 2545–2597; these read EDAV…PVAP and TISE…VRDE. The segment covering 2553–2569 has biased composition (low complexity); that stretch reads SAFSNKGSSSSATGASS. Over residues 2582-2597 the composition is skewed to basic and acidic residues; it reads TSKDQSHVRPETVRDE. The interval 2598 to 3029 is condensation (C) domain; that stretch reads RMSPAQARIW…HVKLKDCVIH (432 aa). The tract at residues 3063–3459 is adenylation (A) (KR) domain; the sequence is LKSPKNAAIQ…GTLLCLGRLD (397 aa). The reductase (RED) domain stretch occupies residues 3063–3459; sequence LKSPKNAAIQ…GTLLCLGRLD (397 aa). A Carrier 2 domain is found at 3572–3651; the sequence is EKMNIREGEL…EMALCVDEQR (80 aa). Ser-3611 carries the post-translational modification O-(pantetheine 4'-phosphoryl)serine.

In the C-terminal section; belongs to the NRP synthetase family.

It catalyses the reaction L-tyrosine + holo-[ACP] + 7 malonyl-CoA + acetyl-CoA + 8 AH2 + 2 S-adenosyl-L-methionine + ATP + 4 H(+) = N-[(4E,6E,10S,12Z,14E)-6,10-dimethyl-3-oxohexadeca-4,6,12,14-tetraenoyl]-L-tyrosyl-[ACP] + 8 A + AMP + 2 S-adenosyl-L-homocysteine + 7 CO2 + diphosphate + 8 CoA + 6 H2O. It functions in the pathway mycotoxin biosynthesis. Its function is as follows. Hybrid PKS-NRPS synthetase; part of the gene cluster that mediates the biosynthesis of ilicicolin H, a 4-hydroxy-2-pyridonealkaloid that has potent and broad antifungal activities by inhibiting the mitochondrial respiration chain. IccA assembles the backbone of ilicicolin H. The PKS portion and trans-acting enoyl reductase iccB work together to construct an octaketide, and two methyl groups are introduced by the MT domain during the chain assembly. The nascent chain is then condensed with tyrosine, catalyzed by the C domain, and the resulting PKS-NRPS hybrid is offloaded by the RED domain to form an advanced tetramic acid intermediate. The biosynthesis of ilicicolin H starts with formation of the tetramic acid by the hybrid PKS-NRPS synthetase iccA with the partnering trans-enoyl reductase iccB since iccA lacks a designated enoylreductase (ER) domain. The cytochrome P450 monooxygenase iccC then catalyzes the ring expansion of the tetramate to the acyclic 2-pyridone. The pericyclase iccD further converts the acyclic 2-pyridone into 8-epi-ilicicolin H. Finally, the epimerase iccE converts 8-epi-ilicicolin H into ilicicolin H via epimerization. IccA to iccE are sufficient for ilicicolin H biosynthesis and the roles of the remaining enzymes, iccF, iccG and iccH within the pathway have still to be determined. This chain is Hybrid PKS-NRPS synthetase iccA, found in Talaromyces variabilis (Penicillium variabile).